A 156-amino-acid polypeptide reads, in one-letter code: SsrA-binding protein (156 aa).

The protein belongs to the SmpB family.

It is found in the cytoplasm. Functionally, required for rescue of stalled ribosomes mediated by trans-translation. Binds to transfer-messenger RNA (tmRNA), required for stable association of tmRNA with ribosomes. tmRNA and SmpB together mimic tRNA shape, replacing the anticodon stem-loop with SmpB. tmRNA is encoded by the ssrA gene; the 2 termini fold to resemble tRNA(Ala) and it encodes a 'tag peptide', a short internal open reading frame. During trans-translation Ala-aminoacylated tmRNA acts like a tRNA, entering the A-site of stalled ribosomes, displacing the stalled mRNA. The ribosome then switches to translate the ORF on the tmRNA; the nascent peptide is terminated with the 'tag peptide' encoded by the tmRNA and targeted for degradation. The ribosome is freed to recommence translation, which seems to be the essential function of trans-translation. The polypeptide is SsrA-binding protein (Clostridium botulinum (strain Loch Maree / Type A3)).